Here is a 217-residue protein sequence, read N- to C-terminus: Putative 8-oxo-dGTP diphosphatase 3 (217 aa).

Residues 30–164 (GRYGAAGLLL…PGFAASWQRL (135 aa)) form the Nudix hydrolase domain. A disordered region spans residues 67-92 (LPGGARDSHETPEQTAVRESSEEAGL). Mg(2+)-binding residues include Gly70, Glu85, Glu88, and Glu89. A Nudix box motif is present at residues 70-91 (GARDSHETPEQTAVRESSEEAG).

The protein belongs to the Nudix hydrolase family. The cofactor is Mg(2+). It depends on Mn(2+) as a cofactor.

The catalysed reaction is 8-oxo-dGTP + H2O = 8-oxo-dGMP + diphosphate + H(+). Functionally, may be involved in the GO system responsible for removing an oxidatively damaged form of guanine (7,8-dihydro-8-oxoguanine, 8-oxo-dGTP) from DNA and the nucleotide pool. 8-oxo-dGTP is inserted opposite dA and dC residues of template DNA with almost equal efficiency thus leading to A.T to G.C transversions. MutT specifically degrades 8-oxo-dGTP to the monophosphate. This is Putative 8-oxo-dGTP diphosphatase 3 (mutT3) from Mycobacterium tuberculosis (strain CDC 1551 / Oshkosh).